A 148-amino-acid polypeptide reads, in one-letter code: UPF0208 membrane protein HD_1715 (148 aa).

The next 2 helical transmembrane spans lie at 41–60 (AARFMPIFACFAILWQYFFT) and 66–88 (ILANAIITSLFAISLPYQGLYWL).

The protein belongs to the UPF0208 family.

The protein resides in the cell inner membrane. This is UPF0208 membrane protein HD_1715 from Haemophilus ducreyi (strain 35000HP / ATCC 700724).